The following is a 461-amino-acid chain: Photosystem II CP43 reaction center protein (461 aa).

Positions 1 to 2 (ME) are excised as a propeptide. Residue Thr-3 is modified to N-acetylthreonine. The residue at position 3 (Thr-3) is a Phosphothreonine. A run of 5 helical transmembrane segments spans residues 57-81 (LFEVAHFVPEKPMYEQGLILLPHLA), 122-143 (LLGPETLEESFPFFGYVWKDRN), 166-188 (KALYFGGVYDTWAPGGGDVRKIT), 243-263 (KPFAWARRAFVWSGEAYLSYS), and 279-300 (WFNNTAYPSEFYGPTGPEASQA). Residue Glu-355 coordinates [CaMn4O5] cluster. Residues 435 to 459 (RARAAAAGFEKGIDRDLEPVLSMTP) traverse the membrane as a helical segment.

This sequence belongs to the PsbB/PsbC family. PsbC subfamily. PSII is composed of 1 copy each of membrane proteins PsbA, PsbB, PsbC, PsbD, PsbE, PsbF, PsbH, PsbI, PsbJ, PsbK, PsbL, PsbM, PsbT, PsbX, PsbY, PsbZ, Psb30/Ycf12, at least 3 peripheral proteins of the oxygen-evolving complex and a large number of cofactors. It forms dimeric complexes. Binds multiple chlorophylls and provides some of the ligands for the Ca-4Mn-5O cluster of the oxygen-evolving complex. It may also provide a ligand for a Cl- that is required for oxygen evolution. PSII binds additional chlorophylls, carotenoids and specific lipids. is required as a cofactor.

It is found in the plastid. The protein localises to the chloroplast thylakoid membrane. Functionally, one of the components of the core complex of photosystem II (PSII). It binds chlorophyll and helps catalyze the primary light-induced photochemical processes of PSII. PSII is a light-driven water:plastoquinone oxidoreductase, using light energy to abstract electrons from H(2)O, generating O(2) and a proton gradient subsequently used for ATP formation. The sequence is that of Photosystem II CP43 reaction center protein from Ceratophyllum demersum (Rigid hornwort).